The sequence spans 361 residues: UDP-N-acetylglucosamine--N-acetylmuramyl-(pentapeptide) pyrophosphoryl-undecaprenol N-acetylglucosamine transferase (361 aa).

UDP-N-acetyl-alpha-D-glucosamine-binding positions include 12-14, Asn-126, Arg-167, Ser-192, Ile-247, and Gln-292; that span reads TGG.

Belongs to the glycosyltransferase 28 family. MurG subfamily.

The protein resides in the cell inner membrane. The enzyme catalyses di-trans,octa-cis-undecaprenyl diphospho-N-acetyl-alpha-D-muramoyl-L-alanyl-D-glutamyl-meso-2,6-diaminopimeloyl-D-alanyl-D-alanine + UDP-N-acetyl-alpha-D-glucosamine = di-trans,octa-cis-undecaprenyl diphospho-[N-acetyl-alpha-D-glucosaminyl-(1-&gt;4)]-N-acetyl-alpha-D-muramoyl-L-alanyl-D-glutamyl-meso-2,6-diaminopimeloyl-D-alanyl-D-alanine + UDP + H(+). It participates in cell wall biogenesis; peptidoglycan biosynthesis. In terms of biological role, cell wall formation. Catalyzes the transfer of a GlcNAc subunit on undecaprenyl-pyrophosphoryl-MurNAc-pentapeptide (lipid intermediate I) to form undecaprenyl-pyrophosphoryl-MurNAc-(pentapeptide)GlcNAc (lipid intermediate II). The chain is UDP-N-acetylglucosamine--N-acetylmuramyl-(pentapeptide) pyrophosphoryl-undecaprenol N-acetylglucosamine transferase from Syntrophus aciditrophicus (strain SB).